The chain runs to 461 residues: Probable metabolite transport protein CsbC (461 aa).

The Cytoplasmic segment spans residues 1 to 14 (MKKDTRKYMIYFFG). A helical membrane pass occupies residues 15 to 35 (ALGGLLYGYDTGVISGALLFI). The Extracellular segment spans residues 36–38 (NND). Residues 39–59 (IPLTTLTEGLVVSMLLLGAIF) form a helical membrane-spanning segment. Topologically, residues 60 to 76 (GSALSGTCSDRWGRRKV) are cytoplasmic. The chain crosses the membrane as a helical span at residues 77-97 (VFVLSIIFIIGALACAFSQTI). The Extracellular segment spans residues 98–104 (GMLIASR). The helical transmembrane segment at 105-125 (VILGLAVGGSTALVPVYLSEM) threads the bilayer. The Cytoplasmic portion of the chain corresponds to 126–139 (APTKIRGTLGTMNN). A helical transmembrane segment spans residues 140-160 (LMIVTGILLAYIVNYLFTPFE). The Extracellular portion of the chain corresponds to 161–163 (AWR). A helical transmembrane segment spans residues 164 to 184 (WMVGLAAVPAVLLLIGIAFMP). The Cytoplasmic segment spans residues 185–241 (ESPRWLVKRGSEEEARRIMNITHDPKDIEMELAEMKQGEAEKKETTLGVLKAKWIRP). Residues 242 to 262 (MLLIGVGLAIFQQAVGINTVI) form a helical membrane-spanning segment. Residues 263 to 280 (YYAPTIFTKAGLGTSASA) lie on the Extracellular side of the membrane. A helical membrane pass occupies residues 281–301 (LGTMGIGILNVIMCITAMILI). Topologically, residues 302–308 (DRVGRKK) are cytoplasmic. The chain crosses the membrane as a helical span at residues 309–329 (LLIWGSVGITLSLAALSGVLL). Topologically, residues 330 to 341 (TLGLSASTAWMT) are extracellular. A helical membrane pass occupies residues 342 to 362 (VVFLGVYIVFYQATWGPVVWV). Residues 363 to 378 (LMPELFPSKARGAATG) lie on the Cytoplasmic side of the membrane. A helical membrane pass occupies residues 379 to 399 (FTTLVLSAANLIVSLVFPLML). At 400–402 (SAM) the chain is on the extracellular side. A helical transmembrane segment spans residues 403–423 (GIAWVFMVFSVICLLSFFFAF). Topologically, residues 424–461 (YMVPETKGKSLEEIEASLKKRFKKKKSTQNQVLNERTL) are cytoplasmic.

It belongs to the major facilitator superfamily. Sugar transporter (TC 2.A.1.1) family.

Its subcellular location is the cell membrane. Could serve either a nutritional or an osmotic protection function. This is Probable metabolite transport protein CsbC (csbC) from Bacillus subtilis (strain 168).